A 330-amino-acid polypeptide reads, in one-letter code: Low-redox potential peroxidase (330 aa).

A signal peptide spans 1-24 (MRSSTHIFVSFVVYCGVFVTSAIA). Residue Asn-27 is glycosylated (N-linked (GlcNAc...) asparagine). 3 cysteine pairs are disulfide-bonded: Cys-34–Cys-285, Cys-54–Cys-123, and Cys-251–Cys-314. Gly-69, Asp-71, and Ser-73 together coordinate Ca(2+). His-178 is a heme b binding site. Ca(2+) contacts are provided by Ser-179, Asp-196, Thr-198, and Asp-203.

The protein belongs to the peroxidase family. Ligninase subfamily. It depends on Ca(2+) as a cofactor. The cofactor is heme b.

Its subcellular location is the secreted. The catalysed reaction is 2 a phenolic donor + H2O2 = 2 a phenolic radical donor + 2 H2O. Functionally, can oxidize the lignin redox mediator veratryl alcohol to veratryl aldehyde. May be involved in oxidation of lignocellulose substrates. The polypeptide is Low-redox potential peroxidase (LnP) (Taiwanofungus camphoratus (Poroid brown-rot fungus)).